The following is a 264-amino-acid chain: Thymidylate synthase (264 aa).

Position 21 (Arg21) interacts with dUMP. Position 51 (His51) interacts with (6R)-5,10-methylene-5,6,7,8-tetrahydrofolate. 126-127 contributes to the dUMP binding site; sequence RR. The active-site Nucleophile is the Cys146. DUMP contacts are provided by residues 166-169, Asn177, and 207-209; these read RSAD and HIY. Residue Asp169 coordinates (6R)-5,10-methylene-5,6,7,8-tetrahydrofolate. Ala263 is a (6R)-5,10-methylene-5,6,7,8-tetrahydrofolate binding site.

It belongs to the thymidylate synthase family. Bacterial-type ThyA subfamily. Homodimer.

It localises to the cytoplasm. It catalyses the reaction dUMP + (6R)-5,10-methylene-5,6,7,8-tetrahydrofolate = 7,8-dihydrofolate + dTMP. Its pathway is pyrimidine metabolism; dTTP biosynthesis. Catalyzes the reductive methylation of 2'-deoxyuridine-5'-monophosphate (dUMP) to 2'-deoxythymidine-5'-monophosphate (dTMP) while utilizing 5,10-methylenetetrahydrofolate (mTHF) as the methyl donor and reductant in the reaction, yielding dihydrofolate (DHF) as a by-product. This enzymatic reaction provides an intracellular de novo source of dTMP, an essential precursor for DNA biosynthesis. The sequence is that of Thymidylate synthase from Cupriavidus metallidurans (strain ATCC 43123 / DSM 2839 / NBRC 102507 / CH34) (Ralstonia metallidurans).